The sequence spans 441 residues: Methylenetetrahydrofolate--tRNA-(uracil-5-)-methyltransferase TrmFO (441 aa).

Residue 10-15 coordinates FAD; that stretch reads GAGLAG.

The protein belongs to the MnmG family. TrmFO subfamily. FAD serves as cofactor.

The protein resides in the cytoplasm. It catalyses the reaction uridine(54) in tRNA + (6R)-5,10-methylene-5,6,7,8-tetrahydrofolate + NADH + H(+) = 5-methyluridine(54) in tRNA + (6S)-5,6,7,8-tetrahydrofolate + NAD(+). The enzyme catalyses uridine(54) in tRNA + (6R)-5,10-methylene-5,6,7,8-tetrahydrofolate + NADPH + H(+) = 5-methyluridine(54) in tRNA + (6S)-5,6,7,8-tetrahydrofolate + NADP(+). Its function is as follows. Catalyzes the folate-dependent formation of 5-methyl-uridine at position 54 (M-5-U54) in all tRNAs. In Desulforamulus reducens (strain ATCC BAA-1160 / DSM 100696 / MI-1) (Desulfotomaculum reducens), this protein is Methylenetetrahydrofolate--tRNA-(uracil-5-)-methyltransferase TrmFO.